The sequence spans 492 residues: Prenylcysteine oxidase 1-like (492 aa).

The N-terminal stretch at 1 to 21 is a signal peptide; the sequence is MAHAARLLAALAALLAAAATG. An N-linked (GlcNAc...) asparagine glycan is attached at Asn-340.

The protein belongs to the prenylcysteine oxidase family. Requires FAD as cofactor.

It localises to the secreted. Likely to have oxidoreductase activity. Required in the mevalonate pathway to regulate prenylation and enhances the bactericidal activity of neutrophils. This is Prenylcysteine oxidase 1-like (PCYOX1L) from Bos taurus (Bovine).